Here is a 162-residue protein sequence, read N- to C-terminus: MSRRVLLINGPNLNLLGKREPHIYGSTTLEDIETQARQQAHELGVEIDTFQSNHEGAIVDRIQETAGWGPNVRETDTPGKRVSAIIINAGALTHTSVAVRDALAAVAIPFVELHVSNVHARETFRAHSYLSDKAVAVICGMGAYGYSAAIEFAAKHLKIEGE.

Tyr24 serves as the catalytic Proton acceptor. Residues Asn88, His94, and Asp101 each contribute to the substrate site. His114 acts as the Proton donor in catalysis. Substrate contacts are provided by residues 115 to 116 (VS) and Arg125.

This sequence belongs to the type-II 3-dehydroquinase family. In terms of assembly, homododecamer. Adopts a ring-like structure, composed of an arrangement of two hexameric rings stacked on top of one another.

The catalysed reaction is 3-dehydroquinate = 3-dehydroshikimate + H2O. It functions in the pathway aromatic compound metabolism; 3,4-dihydroxybenzoate biosynthesis; 3,4-dihydroxybenzoate from 3-dehydroquinate: step 1/2. Is involved in the catabolism of quinate. Allows the utilization of quinate as carbon source via the beta-ketoadipate pathway. The sequence is that of Catabolic 3-dehydroquinase from Podospora anserina (strain S / ATCC MYA-4624 / DSM 980 / FGSC 10383) (Pleurage anserina).